Reading from the N-terminus, the 303-residue chain is tRNA pseudouridine synthase B (303 aa).

Asp47 (nucleophile) is an active-site residue.

This sequence belongs to the pseudouridine synthase TruB family. Type 1 subfamily.

It carries out the reaction uridine(55) in tRNA = pseudouridine(55) in tRNA. In terms of biological role, responsible for synthesis of pseudouridine from uracil-55 in the psi GC loop of transfer RNAs. This chain is tRNA pseudouridine synthase B, found in Ruegeria pomeroyi (strain ATCC 700808 / DSM 15171 / DSS-3) (Silicibacter pomeroyi).